The following is a 181-amino-acid chain: Adenine phosphoribosyltransferase (181 aa).

This sequence belongs to the purine/pyrimidine phosphoribosyltransferase family. In terms of assembly, homodimer.

The protein resides in the cytoplasm. It carries out the reaction AMP + diphosphate = 5-phospho-alpha-D-ribose 1-diphosphate + adenine. The protein operates within purine metabolism; AMP biosynthesis via salvage pathway; AMP from adenine: step 1/1. In terms of biological role, catalyzes a salvage reaction resulting in the formation of AMP, that is energically less costly than de novo synthesis. The polypeptide is Adenine phosphoribosyltransferase (Aprt) (Drosophila pseudoobscura pseudoobscura (Fruit fly)).